The following is a 116-amino-acid chain: Flagellar transcriptional regulator FlhD (116 aa).

Belongs to the FlhD family. In terms of assembly, homodimer; disulfide-linked. Forms a heterohexamer composed of two FlhC and four FlhD subunits. Each FlhC binds a FlhD dimer, forming a heterotrimer, and a hexamer assembles by dimerization of two heterotrimers.

The protein localises to the cytoplasm. Its function is as follows. Functions in complex with FlhC as a master transcriptional regulator that regulates transcription of several flagellar and non-flagellar operons by binding to their promoter region. Activates expression of class 2 flagellar genes, including fliA, which is a flagellum-specific sigma factor that turns on the class 3 genes. Also regulates genes whose products function in a variety of physiological pathways. This chain is Flagellar transcriptional regulator FlhD, found in Enterobacter sp. (strain 22).